Reading from the N-terminus, the 489-residue chain is 3-octaprenyl-4-hydroxybenzoate carboxy-lyase (489 aa).

Asn-172 contributes to the Mn(2+) binding site. Residues 175–177 (IYR), 189–191 (RWL), and 194–195 (RG) each bind prenylated FMN. Residue Glu-238 participates in Mn(2+) binding. The active-site Proton donor is the Asp-287.

Belongs to the UbiD family. Homohexamer. It depends on prenylated FMN as a cofactor. Mn(2+) is required as a cofactor.

The protein resides in the cell membrane. The enzyme catalyses a 4-hydroxy-3-(all-trans-polyprenyl)benzoate + H(+) = a 2-(all-trans-polyprenyl)phenol + CO2. The protein operates within cofactor biosynthesis; ubiquinone biosynthesis. In terms of biological role, catalyzes the decarboxylation of 3-octaprenyl-4-hydroxy benzoate to 2-octaprenylphenol, an intermediate step in ubiquinone biosynthesis. The sequence is that of 3-octaprenyl-4-hydroxybenzoate carboxy-lyase from Tolumonas auensis (strain DSM 9187 / NBRC 110442 / TA 4).